A 453-amino-acid polypeptide reads, in one-letter code: Cytochrome b-c1 complex subunit 2, mitochondrial (453 aa).

Residues 1–14 (MKLLSRAGSFSRFY) constitute a mitochondrion transit peptide. Residues Lys-66, Lys-199, and Lys-250 each carry the N6-acetyllysine modification. A Phosphoserine modification is found at Ser-368.

The protein belongs to the peptidase M16 family. UQCRC2/QCR2 subfamily. Component of the ubiquinol-cytochrome c oxidoreductase (cytochrome b-c1 complex, complex III, CIII), a multisubunit enzyme composed of 11 subunits. The complex is composed of 3 respiratory subunits cytochrome b, cytochrome c1 and Rieske protein UQCRFS1, 2 core protein subunits UQCRC1/QCR1 and UQCRC2/QCR2, and 6 low-molecular weight protein subunits UQCRH/QCR6, UQCRB/QCR7, UQCRQ/QCR8, UQCR10/QCR9, UQCR11/QCR10 and subunit 9, the cleavage product of Rieske protein UQCRFS1. The complex exists as an obligatory dimer and forms supercomplexes (SCs) in the inner mitochondrial membrane with NADH-ubiquinone oxidoreductase (complex I, CI) and cytochrome c oxidase (complex IV, CIV), resulting in different assemblies (supercomplex SCI(1)III(2)IV(1) and megacomplex MCI(2)III(2)IV(2)). Interacts with RAB5IF. Interacts with STMP1. Post-translationally, acetylation of Lys-159 and Lys-250 is observed in liver mitochondria from fasted mice but not from fed mice. Expressed in neurons and astrocytes of the cerebral cortex and hippocampus (at protein level).

The protein resides in the mitochondrion inner membrane. Its function is as follows. Component of the ubiquinol-cytochrome c oxidoreductase, a multisubunit transmembrane complex that is part of the mitochondrial electron transport chain which drives oxidative phosphorylation. The respiratory chain contains 3 multisubunit complexes succinate dehydrogenase (complex II, CII), ubiquinol-cytochrome c oxidoreductase (cytochrome b-c1 complex, complex III, CIII) and cytochrome c oxidase (complex IV, CIV), that cooperate to transfer electrons derived from NADH and succinate to molecular oxygen, creating an electrochemical gradient over the inner membrane that drives transmembrane transport and the ATP synthase. The cytochrome b-c1 complex catalyzes electron transfer from ubiquinol to cytochrome c, linking this redox reaction to translocation of protons across the mitochondrial inner membrane, with protons being carried across the membrane as hydrogens on the quinol. In the process called Q cycle, 2 protons are consumed from the matrix, 4 protons are released into the intermembrane space and 2 electrons are passed to cytochrome c. The 2 core subunits UQCRC1/QCR1 and UQCRC2/QCR2 are homologous to the 2 mitochondrial-processing peptidase (MPP) subunits beta-MPP and alpha-MPP respectively, and they seem to have preserved their MPP processing properties. May be involved in the in situ processing of UQCRFS1 into the mature Rieske protein and its mitochondrial targeting sequence (MTS)/subunit 9 when incorporated into complex III. This Mus musculus (Mouse) protein is Cytochrome b-c1 complex subunit 2, mitochondrial (Uqcrc2).